The following is a 393-amino-acid chain: Mitogen-activated protein kinase homolog NTF4 (393 aa).

The disordered stretch occupies residues 1 to 32 (MDGPAHQTDTVMSDAAGQQPAPPSQPVAGIDN). The Protein kinase domain maps to 60 to 345 (KPPIMPIGKG…VEDALAHPYL (286 aa)). ATP-binding positions include 66–74 (IGKGAYGIV) and K89. D186 acts as the Proton acceptor in catalysis. T218 is subject to Phosphothreonine. The TXY motif lies at 218-220 (TEY). Y220 carries the post-translational modification Phosphotyrosine.

This sequence belongs to the protein kinase superfamily. CMGC Ser/Thr protein kinase family. MAP kinase subfamily. Requires Mg(2+) as cofactor. Post-translationally, dually phosphorylated on Thr-218 and Tyr-220, which activates the enzyme. Very low autophosphorylation, although dramatically increased when Mn(2+) is added to the reaction instead of Mg(2+).

The catalysed reaction is L-seryl-[protein] + ATP = O-phospho-L-seryl-[protein] + ADP + H(+). It carries out the reaction L-threonyl-[protein] + ATP = O-phospho-L-threonyl-[protein] + ADP + H(+). With respect to regulation, activated by tyrosine and threonine phosphorylation. The chain is Mitogen-activated protein kinase homolog NTF4 (NTF4) from Nicotiana tabacum (Common tobacco).